A 61-amino-acid chain; its full sequence is MADAQDDMSQMQDKFTYDYETIRKGGLIFAAIAFVVGMLIIFSGRFRCGRKKQLRALNDDM.

A helical transmembrane segment spans residues 24 to 44 (KGGLIFAAIAFVVGMLIIFSG).

Belongs to the FXYD family. In terms of assembly, regulatory subunit of the sodium/potassium-transporting ATPase which is composed of a catalytic alpha subunit, an auxiliary non-catalytic beta subunit and an additional regulatory subunit.

Its subcellular location is the membrane. Its function is as follows. May be involved in forming the receptor site for cardiac glycoside binding or may modulate the transport function of the sodium ATPase. This Xenopus laevis (African clawed frog) protein is Sodium/potassium-transporting ATPase subunit gamma (fxyd2).